The primary structure comprises 631 residues: 30-kDa cleavage and polyadenylation specificity factor 30 (631 aa).

Residues 12-38 are disordered; the sequence is EGGLDSGPVQNTASVPVAPPENSSSAA. 3 C3H1-type zinc fingers span residues 60–87, 88–112, and 114–141; these read SFRQTVCRHWLRGLCMKGDACGFLHQFD, KARMPICRFFRLYGECREQDCVYKH, and NEDIKECNMYKLGFCPNGPDCRYRHAKL. The interval 179–234 is disordered; that stretch reads QDRPQGQVPMQGQPQESGNLQQQQQQQPQQSQHQVSQTLIPNPADQTNRTSHPLPQ. The span at 182–215 shows a compositional bias: low complexity; it reads PQGQVPMQGQPQESGNLQQQQQQQPQQSQHQVSQ. The segment covering 216–231 has biased composition (polar residues); the sequence is TLIPNPADQTNRTSHP. A YTH domain is found at 237-372; sequence NRYFVVKSNN…SVGEQLASLL (136 aa). Positions 392 to 407 are enriched in basic and acidic residues; that stretch reads EEEKAKGVNPESRAEN. 2 disordered regions span residues 392 to 447 and 541 to 631; these read EEEK…RGIM and PHMG…KKRR. The segment covering 412–432 has biased composition (acidic residues); sequence PFEDNEEEEEEEDESEEEEES. Over residues 573–583 the composition is skewed to basic and acidic residues; sequence KTPERSDERGV. Residues S610 and S612 each carry the phosphoserine modification. The segment covering 621–631 has biased composition (basic residues); it reads RSRHGEGKKRR.

Belongs to the CPSF4/YTH1 family. In terms of assembly, component of the cleavage and polyadenylation specificity factor (CPSF) complex. Can form homodimers. Binds to calmodulin. Forms a complex with cleavage and polyadenylation specificity factor (CPSF) subunits CPSF73-I, CPSF73-II, CPSF100, CPSF160, CFIS2, FIPS3, FIPS5, PAPS2, PAPS3, CLPS3, PCFS1, PCFS4, CSTF50 and CSTF77. As to expression, expressed in seedlings, roots, leaves, siliques, stems and flowers.

It is found in the nucleus. The protein resides in the cytoplasm. Endonuclease activity is repressed by the N-terminal domain of FIPS5. Nuclease activity is inhibited by zinc (&gt;100 uM), cadmium in a progressive manner (50 percent activity at 1 mM Cd(2+)), and high salt levels (e.g. KCl or NaCl &gt;600 mM). Stimulated by ATP in the presence of Zn(2+), even at inhibitory zinc concentrations. Elevated temperatures prevent RNA-binding at 55 degrees Celsius, but endonuclease activity at 70 degrees Celsius. The sulfhydryl reagent dithiothreitol (DTT) inhibits both RNA-binding and nuclease activities. Component of the cleavage and polyadenylation specificity factor (CPSF) complex that play a key role in pre-mRNA 3'-end formation. May interact with poly(A) polymerase and other factors to bring about cleavage and poly(A) addition. Mediates poly(A) site selection. Binds RNA in a calcium-dependent manner. Exhibits endonuclease activity with an ability to nick and degrade linear as well as circular single-stranded RNA that leaves RNA 3' ends with hydroxyl groups, thus mediating processing of the pre-mRNA as a prelude to the polyadenylation. Involved in the post-transcriptional control, probably via poly(A) addition, of the responses of plants to stress, especially genes mediating tolerance to oxidative stress. Plays a role in the regulation of salicylic acid (SA) production via the control of messenger RNA 3' end processing, thus being a key component of programmed cell death and plant immune responses required for resistance to virulent Pseudomonas syringae pv tomato DC3000 (Pst). In Arabidopsis thaliana (Mouse-ear cress), this protein is 30-kDa cleavage and polyadenylation specificity factor 30.